A 155-amino-acid polypeptide reads, in one-letter code: Small ribosomal subunit protein uS7cz/uS7cy (155 aa).

It belongs to the universal ribosomal protein uS7 family. In terms of assembly, part of the 30S ribosomal subunit.

The protein localises to the plastid. It is found in the chloroplast. In terms of biological role, one of the primary rRNA binding proteins, it binds directly to 16S rRNA where it nucleates assembly of the head domain of the 30S subunit. The sequence is that of Small ribosomal subunit protein uS7cz/uS7cy (rps7-A) from Crucihimalaya wallichii (Rock-cress).